A 1257-amino-acid chain; its full sequence is Endochitinase A (1257 aa).

The first 21 residues, 1–21 (MVFKPLTIAAAIAGLTPFVSA), serve as a signal peptide directing secretion. In terms of domain architecture, GH18 spans 28–339 (SNVAVYYGQG…DVIKDILVAV (312 aa)). Catalysis depends on glutamate 175, which acts as the Proton donor. Disordered regions lie at residues 364-429 (TPVA…STPV), 595-980 (TPAA…LAPI), and 1141-1174 (DALT…PTTT). Residues 595–696 (TPAASSSPAV…STPVRSTSSV (102 aa)) are compositionally biased toward low complexity. The span at 700–715 (KSSSAPVIPKPSSTVI) shows a compositional bias: polar residues. The span at 716-935 (ATFTSSSGSL…ASGSGAQDST (220 aa)) shows a compositional bias: low complexity. An N-linked (GlcNAc...) asparagine glycan is attached at asparagine 825. Positions 940-964 (HASTLSPSYSTPLASASGQTGSPTT) are enriched in polar residues. Asparagine 973 is a glycosylation site (N-linked (GlcNAc...) asparagine). Residues 1145-1154 (ASPSGSQPAG) show a composition bias toward polar residues. Residues 1156–1174 (SSPGQSAPTAPASTAPTTT) show a composition bias toward low complexity. Glycine 1231 carries the GPI-anchor amidated glycine lipid modification. A propeptide spans 1232 to 1257 (AASRVSRLQHGAGAVSAFALFLLAAI) (removed in mature form).

It belongs to the glycosyl hydrolase 18 family. Chitinase class III subfamily. O-glycosylated.

Its subcellular location is the cell membrane. The protein resides in the secreted. It is found in the cell wall. It carries out the reaction Random endo-hydrolysis of N-acetyl-beta-D-glucosaminide (1-&gt;4)-beta-linkages in chitin and chitodextrins.. In terms of biological role, GPI-anchored chitinase involved in the degradation of chitin, a component of the cell walls of fungi and exoskeletal elements of some animals (including worms and arthropods). Required to reshape the cell wall at the sites where cell wall remodeling and/or cell wall maturation actively take place such as sites of conidia formation. This is Endochitinase A (ctcA) from Aspergillus niger (strain ATCC MYA-4892 / CBS 513.88 / FGSC A1513).